Reading from the N-terminus, the 562-residue chain is Ycf55-like protein (562 aa).

The region spanning 7–125 is the Response regulatory domain; that stretch reads TIVIVDEDPV…DLVTGLKQVH (119 aa).

This sequence belongs to the ycf55 family.

The protein is Ycf55-like protein of Synechocystis sp. (strain ATCC 27184 / PCC 6803 / Kazusa).